The chain runs to 211 residues: NADH-quinone oxidoreductase subunit I 1 (211 aa).

4Fe-4S ferredoxin-type domains lie at 50-80 and 96-125; these read LNRH…VEGA and RVYQ…MTNE. 8 residues coordinate [4Fe-4S] cluster: cysteine 60, cysteine 63, cysteine 66, cysteine 70, cysteine 105, cysteine 108, cysteine 111, and cysteine 115. A disordered region spans residues 192–211; it reads QEGDSTFGATEPASEEVIRR.

The protein belongs to the complex I 23 kDa subunit family. NDH-1 is composed of 14 different subunits. Subunits NuoA, H, J, K, L, M, N constitute the membrane sector of the complex. Requires [4Fe-4S] cluster as cofactor.

Its subcellular location is the cell membrane. It carries out the reaction a quinone + NADH + 5 H(+)(in) = a quinol + NAD(+) + 4 H(+)(out). NDH-1 shuttles electrons from NADH, via FMN and iron-sulfur (Fe-S) centers, to quinones in the respiratory chain. The immediate electron acceptor for the enzyme in this species is believed to be ubiquinone. Couples the redox reaction to proton translocation (for every two electrons transferred, four hydrogen ions are translocated across the cytoplasmic membrane), and thus conserves the redox energy in a proton gradient. This is NADH-quinone oxidoreductase subunit I 1 from Streptomyces coelicolor (strain ATCC BAA-471 / A3(2) / M145).